The primary structure comprises 164 residues: ATP synthase subunit b (164 aa).

Residues 6–26 (GELVGNFILVTGSVIVLLLLI) form a helical membrane-spanning segment.

This sequence belongs to the ATPase B chain family. As to quaternary structure, F-type ATPases have 2 components, F(1) - the catalytic core - and F(0) - the membrane proton channel. F(1) has five subunits: alpha(3), beta(3), gamma(1), delta(1), epsilon(1). F(0) has three main subunits: a(1), b(2) and c(10-14). The alpha and beta chains form an alternating ring which encloses part of the gamma chain. F(1) is attached to F(0) by a central stalk formed by the gamma and epsilon chains, while a peripheral stalk is formed by the delta and b chains.

It localises to the cell membrane. Functionally, f(1)F(0) ATP synthase produces ATP from ADP in the presence of a proton or sodium gradient. F-type ATPases consist of two structural domains, F(1) containing the extramembraneous catalytic core and F(0) containing the membrane proton channel, linked together by a central stalk and a peripheral stalk. During catalysis, ATP synthesis in the catalytic domain of F(1) is coupled via a rotary mechanism of the central stalk subunits to proton translocation. Its function is as follows. Component of the F(0) channel, it forms part of the peripheral stalk, linking F(1) to F(0). The polypeptide is ATP synthase subunit b (Streptococcus pyogenes serotype M1).